Reading from the N-terminus, the 160-residue chain is Bacterial microcompartment shell protein PduK (160 aa).

Residues 11–96 (SLGLLEVCGL…PGEGILLAET (86 aa)) enclose the BMC domain.

Belongs to the bacterial microcompartments protein family. Interacts with shell proteins PduA and PduP and assembly protein PduM. Requires Fe cation as cofactor.

It localises to the bacterial microcompartment. Its pathway is polyol metabolism; 1,2-propanediol degradation. Its function is as follows. A minor shell protein of the bacterial microcompartment (BMC) dedicated to 1,2-propanediol (1,2-PD) degradation. The isolated BMC shell component protein ratio for J:A:B':B:K:T:U is approximately 15:10:7:6:1:1:2. Not required for structural integrity of BMCs nor to mitigate propionaldehyde toxicity, it might be involved in spatial organization of BMCs. Functionally, the 1,2-PD-specific bacterial microcompartment (BMC) concentrates low levels of 1,2-PD catabolic enzymes, concentrates volatile reaction intermediates thus enhancing pathway flux and keeps the level of toxic, mutagenic propionaldehyde low. In Salmonella typhimurium (strain LT2 / SGSC1412 / ATCC 700720), this protein is Bacterial microcompartment shell protein PduK.